The primary structure comprises 57 residues: Large ribosomal subunit protein bL32B (57 aa).

Belongs to the bacterial ribosomal protein bL32 family.

This chain is Large ribosomal subunit protein bL32B, found in Listeria welshimeri serovar 6b (strain ATCC 35897 / DSM 20650 / CCUG 15529 / CIP 8149 / NCTC 11857 / SLCC 5334 / V8).